Here is a 296-residue protein sequence, read N- to C-terminus: Protease HtpX homolog (296 aa).

2 consecutive transmembrane segments (helical) span residues 7 to 27 (TVLL…LVAG) and 29 to 49 (QGMI…YFFS). Residue H131 coordinates Zn(2+). E132 is a catalytic residue. A Zn(2+)-binding site is contributed by H135. 2 helical membrane-spanning segments follow: residues 141–161 (ILIS…ANMA) and 178–198 (IASI…ATLI). E207 serves as a coordination point for Zn(2+).

The protein belongs to the peptidase M48B family. It depends on Zn(2+) as a cofactor.

The protein localises to the cell inner membrane. This Sulfurihydrogenibium sp. (strain YO3AOP1) protein is Protease HtpX homolog.